Here is a 477-residue protein sequence, read N- to C-terminus: Peroxisome proliferator-activated receptor gamma (477 aa).

A Phosphoserine; by MAPK modification is found at Ser-87. A DNA-binding region (nuclear receptor) is located at residues 110-184 (AIECRVCGDK…VGMSHNAIRF (75 aa)). 2 NR C4-type zinc fingers span residues 113–133 (CRVCGDKASGFHYGVHACEGC) and 150–172 (CDLNCRIHKKSRNKCQFCRFQKC). The segment at 231-281 (TKAKAPGHPDGQSHRQNSRGYTRHELADDGGGSDQGAVREPRAEQGGGDSN) is disordered. An NR LBD domain is found at 252 to 475 (TRHELADDGG…HPLLQEIYKD (224 aa)). Positions 467–475 (PLLQEIYKD) match the 9aaTAD motif.

It belongs to the nuclear hormone receptor family. NR1 subfamily. In terms of assembly, heterodimer with the retinoid X receptor. As to expression, expressed mainly in adipose tissue and kidney.

Its subcellular location is the nucleus. It localises to the cytoplasm. Its function is as follows. Receptor that binds peroxisome proliferators such as hypolipidemic drugs and fatty acids. Once activated by a ligand, the receptor binds to a promoter element in the gene for acyl-CoA oxidase and activates its transcription. It therefore controls the peroxisomal beta-oxidation pathway of fatty acids. Key regulator of adipocyte differentiation and glucose homeostasis. May play a role in the regulation of circadian rhythm. The protein is Peroxisome proliferator-activated receptor gamma (pparg) of Xenopus laevis (African clawed frog).